The primary structure comprises 420 residues: Putative kinase Y4mE (420 aa).

The active-site Proton acceptor is the Asp-302.

Belongs to the HipA Ser/Thr kinase family.

The sequence is that of Putative kinase Y4mE from Sinorhizobium fredii (strain NBRC 101917 / NGR234).